A 635-amino-acid polypeptide reads, in one-letter code: Dual specificity protein kinase zak2 (635 aa).

2 consecutive Protein kinase domains span residues Trp9 to Ile249 and Asn299 to Phe585. ATP is bound by residues Ile15–Arg23 and Lys45. The Proton acceptor role is filled by Asp124. ATP-binding positions include Gly305–Val313 and Lys326. Catalysis depends on Asp427, which acts as the Proton acceptor.

The protein in the N-terminal section; belongs to the protein kinase superfamily. Ser/Thr protein kinase family. This sequence in the C-terminal section; belongs to the protein kinase superfamily. TKL Tyr protein kinase family. C-terminal tyrosine kinase domain is capable of autophosphorylation, in vitro. ZakA and zak2 are coexpressed in prestalk cell population, zakA is enriched in pstB populations and zak1 in pstA populations. ZakA and zak2 are coexpressed in prespore cells, zakA expression levels are 10 fold higher than zak2.

The catalysed reaction is L-seryl-[protein] + ATP = O-phospho-L-seryl-[protein] + ADP + H(+). The enzyme catalyses L-threonyl-[protein] + ATP = O-phospho-L-threonyl-[protein] + ADP + H(+). It carries out the reaction L-tyrosyl-[protein] + ATP = O-phospho-L-tyrosyl-[protein] + ADP + H(+). Its function is as follows. Positive regulator of gsk3/gskA activity required for cell pattern formation and a downstream effector of carC. The kinases, gsk3/gskA, zakA and zak2, form part of a signaling pathway that responds to extracellular cyclic AMP. The pathway has a role in transcriptional regulation; required to direct prespore/spore fates during development. Zak2 negatively regulates prestalk differentiation by regulating expression of ecmA. Phosphorylates Y-214 of gsk3/gskA, in vitro. The polypeptide is Dual specificity protein kinase zak2 (zak2) (Dictyostelium discoideum (Social amoeba)).